Reading from the N-terminus, the 484-residue chain is tRNA sulfurtransferase (484 aa).

A THUMP domain is found at glutamate 63–arginine 167. ATP contacts are provided by residues leucine 185–isoleucine 186, lysine 267, glycine 289, and glutamine 298. Cysteine 346 and cysteine 458 are disulfide-bonded. Residues valine 406 to proline 484 enclose the Rhodanese domain. The active-site Cysteine persulfide intermediate is cysteine 458.

This sequence belongs to the ThiI family.

It is found in the cytoplasm. It carries out the reaction [ThiI sulfur-carrier protein]-S-sulfanyl-L-cysteine + a uridine in tRNA + 2 reduced [2Fe-2S]-[ferredoxin] + ATP + H(+) = [ThiI sulfur-carrier protein]-L-cysteine + a 4-thiouridine in tRNA + 2 oxidized [2Fe-2S]-[ferredoxin] + AMP + diphosphate. It catalyses the reaction [ThiS sulfur-carrier protein]-C-terminal Gly-Gly-AMP + S-sulfanyl-L-cysteinyl-[cysteine desulfurase] + AH2 = [ThiS sulfur-carrier protein]-C-terminal-Gly-aminoethanethioate + L-cysteinyl-[cysteine desulfurase] + A + AMP + 2 H(+). The protein operates within cofactor biosynthesis; thiamine diphosphate biosynthesis. Functionally, catalyzes the ATP-dependent transfer of a sulfur to tRNA to produce 4-thiouridine in position 8 of tRNAs, which functions as a near-UV photosensor. Also catalyzes the transfer of sulfur to the sulfur carrier protein ThiS, forming ThiS-thiocarboxylate. This is a step in the synthesis of thiazole, in the thiamine biosynthesis pathway. The sulfur is donated as persulfide by IscS. The sequence is that of tRNA sulfurtransferase from Shewanella sediminis (strain HAW-EB3).